The chain runs to 117 residues: uncharacterized protein (117 aa).

It is found in the cytoplasm. The protein resides in the nucleus. This is an uncharacterized protein from Saccharomyces cerevisiae (strain ATCC 204508 / S288c) (Baker's yeast).